We begin with the raw amino-acid sequence, 213 residues long: Protein Pars_0011 (213 aa).

An AMMECR1 domain is found at 8 to 201 (EEGRYLVKLA…EREPNEEVYQ (194 aa)).

The polypeptide is Protein Pars_0011 (Pyrobaculum arsenaticum (strain DSM 13514 / JCM 11321 / PZ6)).